Consider the following 465-residue polypeptide: E3 ubiquitin-protein ligase parkin (465 aa).

The Ubiquitin-like domain occupies 1-76 (MIVFVRFNSS…VHIVQRPQRK (76 aa)). Ser65 is subject to Phosphoserine; by PINK1. A disordered region spans residues 71 to 96 (QRPQRKSHETNASGGDKPQSTPEGSI). Positions 77-237 (SHETNASGGD…LITNNSRSIP (161 aa)) are necessary for PINK1-dependent localization to mitochondria. At Thr80 the chain carries Phosphothreonine. Residues 80–93 (TNASGGDKPQSTPE) are compositionally biased toward polar residues. The RING-type 0; atypical zinc finger occupies 141-225 (PTYHSFFVYC…PTSDKDTSVA (85 aa)). The residue at position 175 (Thr175) is a Phosphothreonine; by PINK1. The SYT11 binding 1 stretch occupies residues 204–238 (TRAEFFFKCGAHPTSDKDTSVALNLITNNSRSIPC). Phosphothreonine is present on Thr217. The segment at 234-465 (RSIPCIACTD…ACMGDHWFDV (232 aa)) is TRIAD supradomain. Zn(2+) contacts are provided by Cys238, Cys241, Cys253, His257, Cys260, Cys263, Cys289, Cys293, Cys332, and Cys337. The RING-type 1 zinc-finger motif lies at 238 to 293 (CIACTDVRNPVLVFQCNHRHVICLDCFHLYCVTRLNDRQFVHDAQLGYSLPCVAGC). The tract at residues 257–293 (HVICLDCFHLYCVTRLNDRQFVHDAQLGYSLPCVAGC) is SYT11 binding 2. The IBR-type zinc-finger motif lies at 313-377 (NRYQQYGAEE…CKEAYHEGEC (65 aa)). Lys349 participates in a covalent cross-link: Glycyl lysine isopeptide (Lys-Gly) (interchain with G-Cter in ISG15). Residues Cys352, Cys360, Cys365, and Cys368 each coordinate Zn(2+). Lys369 participates in a covalent cross-link: Glycyl lysine isopeptide (Lys-Gly) (interchain with G-Cter in ISG15). Positions 373 and 377 each coordinate Zn(2+). The segment at 378–410 (DSMFEASGATSQAYRVDQRAAEQARWEEASKET) is REP. Zn(2+) is bound by residues Cys418 and Cys421. The segment at 418–449 (CPRCNVPIEKNGGCMHMKCPQPQCKLEWCWNC) adopts an RING-type 2; atypical zinc-finger fold. Cys431 is an active-site residue. 6 residues coordinate Zn(2+): Cys436, Cys441, Cys446, Cys449, Cys457, and His461.

The protein belongs to the RBR family. Parkin subfamily. Forms an E3 ubiquitin ligase complex with UBE2L3 or UBE2L6. Mediates 'Lys-63'-linked polyubiquitination by associating with UBE2V1. Part of a SCF-like complex, consisting of PRKN, CUL1 and FBXW7. Interacts with SNCAIP. Binds to the C2A and C2B domains of SYT11. Interacts and regulates the turnover of SEPTIN5. Part of a complex, including STUB1, HSP70 and GPR37. The amount of STUB1 in the complex increases during ER stress. STUB1 promotes the dissociation of HSP70 from PRKN and GPR37, thus facilitating PRKN-mediated GPR37 ubiquitination. HSP70 transiently associates with unfolded GPR37 and inhibits the E3 activity of PRKN, whereas, STUB1 enhances the E3 activity of PRKN through promotion of dissociation of HSP70 from PRKN-GPR37 complexes. Interacts with PSMD4 and PACRG. Interacts with LRRK2. Interacts with RANBP2. Interacts with SUMO1 but not SUMO2, which promotes nuclear localization and autoubiquitination. Interacts (via first RING-type domain) with AIMP2 (via N-terminus). Interacts with PSMA7 and RNF41. Interacts with PINK1. Forms a complex with PINK1 and PARK7. Interacts with CHPF, the interaction with isoform 2 may facilitate PRKN transport into the mitochondria. Interacts with MFN2 (phosphorylated), promotes PRKN localization in dysfunctional depolarized mitochondria. Interacts with FBXO7; this promotes translocation to dysfunctional depolarized mitochondria. Interacts with ZNF746. Interacts with heat shock protein 70 family members, including HSPA1L, HSPA1A and HSPA8; interaction HSPA1L promotes translocation to damaged mitochondria. Interacts with BAG4 and, to a lesser extent, BAG5; interaction with BAG4 inhibits translocation to damaged mitochondria. Forms a complex with PRKN and PARK7. Interacts with AMBRA1. Auto-ubiquitinates in an E2-dependent manner leading to its own degradation. Also polyubiquitinated by RNF41 for proteasomal degradation. Post-translationally, S-nitrosylated. In terms of processing, phosphorylated. Activation requires phosphorylation at Ser-65 by PINK1 and binding to PINK1 phosphorylated ubiquitin. Phosphorylation at Thr-175 by PINK1 and at Thr-217 is important for mitochondrial localization. In terms of tissue distribution, largely confined to neuronal elements, including fibers and neuropil. Highly expressed at the forebrain level, in pyramidal cells of layer V, in various cortical regions and cerebellum. Expressed in the nucleus of diagonal band of Broca, nucleus basalis, bed nucleus of the stria terminalis, and olfactory tubercle. Moderate expression is seen in most neurons of the subthalamic nucleus, heart, skeletal muscle and testis. Moderate expression was found in frontal cortex, parietal cortex, cerebellum, heart, skeletal muscle and testis.

It localises to the cytoplasm. It is found in the cytosol. The protein localises to the nucleus. The protein resides in the endoplasmic reticulum. Its subcellular location is the mitochondrion. It localises to the mitochondrion outer membrane. It is found in the cell projection. The protein localises to the neuron projection. The protein resides in the postsynaptic density. Its subcellular location is the presynapse. The enzyme catalyses [E2 ubiquitin-conjugating enzyme]-S-ubiquitinyl-L-cysteine + [acceptor protein]-L-lysine = [E2 ubiquitin-conjugating enzyme]-L-cysteine + [acceptor protein]-N(6)-ubiquitinyl-L-lysine.. Its pathway is protein modification; protein ubiquitination. Its activity is regulated as follows. In the autoinhibited state the side chain of Phe-463 inserts into a hydrophobic groove in RING-0, occluding the ubiquitin acceptor site Cys-431, whereas the REP repressor element binds RING-1 and blocks its E2-binding site. Activation of PRKN requires 2 steps: (1) phosphorylation at Ser-65 by PINK1 and (2) binding to phosphorylated ubiquitin, leading to unlock repression of the catalytic Cys-431 by the RING-0 region via an allosteric mechanism and converting PRKN to its fully-active form. According to another report, phosphorylation at Ser-65 by PINK1 is not essential for activation and only binding to phosphorylated ubiquitin is essential to unlock repression. In addition, ISG15 conjugation positively regulates its ubiquitin E3 ligase activity by suppressing the intramolecular interaction that maintains its autoinhibited conformation. Its function is as follows. Functions within a multiprotein E3 ubiquitin ligase complex, catalyzing the covalent attachment of ubiquitin moieties onto substrate proteins. Substrates include SYT11 and VDAC1. Other substrates are BCL2, CCNE1, GPR37, RHOT1/MIRO1, MFN1, MFN2, STUB1, SNCAIP, SEPTIN5, TOMM20, USP30, ZNF746, MIRO1 and AIMP2. Mediates monoubiquitination as well as 'Lys-6', 'Lys-11', 'Lys-48'-linked and 'Lys-63'-linked polyubiquitination of substrates depending on the context. Participates in the removal and/or detoxification of abnormally folded or damaged protein by mediating 'Lys-63'-linked polyubiquitination of misfolded proteins such as PARK7: 'Lys-63'-linked polyubiquitinated misfolded proteins are then recognized by HDAC6, leading to their recruitment to aggresomes, followed by degradation. Mediates 'Lys-63'-linked polyubiquitination of a 22 kDa O-linked glycosylated isoform of SNCAIP, possibly playing a role in Lewy-body formation. Mediates monoubiquitination of BCL2, thereby acting as a positive regulator of autophagy. Protects against mitochondrial dysfunction during cellular stress, by acting downstream of PINK1 to coordinate mitochondrial quality control mechanisms that remove and replace dysfunctional mitochondrial components. Depending on the severity of mitochondrial damage and/or dysfunction, activity ranges from preventing apoptosis and stimulating mitochondrial biogenesis to regulating mitochondrial dynamics and eliminating severely damaged mitochondria via mitophagy. Activation and recruitment onto the outer membrane of damaged/dysfunctional mitochondria (OMM) requires PINK1-mediated phosphorylation of both PRKN and ubiquitin. After mitochondrial damage, functions with PINK1 to mediate the decision between mitophagy or preventing apoptosis by inducing either the poly- or monoubiquitination of VDAC1, respectively; polyubiquitination of VDAC1 promotes mitophagy, while monoubiquitination of VDAC1 decreases mitochondrial calcium influx which ultimately inhibits apoptosis. When cellular stress results in irreversible mitochondrial damage, promotes the autophagic degradation of dysfunctional depolarized mitochondria (mitophagy) by promoting the ubiquitination of mitochondrial proteins such as TOMM20, RHOT1/MIRO1, MFN1 and USP30. Preferentially assembles 'Lys-6'-, 'Lys-11'- and 'Lys-63'-linked polyubiquitin chains, leading to mitophagy. The PINK1-PRKN pathway also promotes fission of damaged mitochondria by PINK1-mediated phosphorylation which promotes the PRKN-dependent degradation of mitochondrial proteins involved in fission such as MFN2. This prevents the refusion of unhealthy mitochondria with the mitochondrial network or initiates mitochondrial fragmentation facilitating their later engulfment by autophagosomes. Regulates motility of damaged mitochondria via the ubiquitination and subsequent degradation of MIRO1 and MIRO2; in motor neurons, this likely inhibits mitochondrial intracellular anterograde transport along the axons which probably increases the chance of the mitochondria undergoing mitophagy in the soma. Involved in mitochondrial biogenesis via the 'Lys-48'-linked polyubiquitination of transcriptional repressor ZNF746/PARIS which leads to its subsequent proteasomal degradation and allows activation of the transcription factor PPARGC1A. Limits the production of reactive oxygen species (ROS). Regulates cyclin-E during neuronal apoptosis. In collaboration with CHPF isoform 2, may enhance cell viability and protect cells from oxidative stress. Independently of its ubiquitin ligase activity, protects from apoptosis by the transcriptional repression of p53/TP53. May protect neurons against alpha synuclein toxicity, proteasomal dysfunction, GPR37 accumulation, and kainate-induced excitotoxicity. May play a role in controlling neurotransmitter trafficking at the presynaptic terminal and in calcium-dependent exocytosis. May represent a tumor suppressor gene. This Rattus norvegicus (Rat) protein is E3 ubiquitin-protein ligase parkin.